The following is a 492-amino-acid chain: Cysteine--tRNA ligase (492 aa).

C27 lines the Zn(2+) pocket. The short motif at 29–39 is the 'HIGH' region element; the sequence is VTVYDLCHLGH. The Zn(2+) site is built by C211, H236, and E240. The short motif at 268-272 is the 'KMSKS' region element; that stretch reads KMSKS. K271 is a binding site for ATP.

It belongs to the class-I aminoacyl-tRNA synthetase family. As to quaternary structure, monomer. Zn(2+) serves as cofactor.

The protein localises to the cytoplasm. It catalyses the reaction tRNA(Cys) + L-cysteine + ATP = L-cysteinyl-tRNA(Cys) + AMP + diphosphate. In Prochlorococcus marinus subsp. pastoris (strain CCMP1986 / NIES-2087 / MED4), this protein is Cysteine--tRNA ligase.